The chain runs to 340 residues: Phosphoribosylformylglycinamidine cyclo-ligase (340 aa).

Belongs to the AIR synthase family.

Its subcellular location is the cytoplasm. It carries out the reaction 2-formamido-N(1)-(5-O-phospho-beta-D-ribosyl)acetamidine + ATP = 5-amino-1-(5-phospho-beta-D-ribosyl)imidazole + ADP + phosphate + H(+). It functions in the pathway purine metabolism; IMP biosynthesis via de novo pathway; 5-amino-1-(5-phospho-D-ribosyl)imidazole from N(2)-formyl-N(1)-(5-phospho-D-ribosyl)glycinamide: step 2/2. The sequence is that of Phosphoribosylformylglycinamidine cyclo-ligase from Acetivibrio thermocellus (strain ATCC 27405 / DSM 1237 / JCM 9322 / NBRC 103400 / NCIMB 10682 / NRRL B-4536 / VPI 7372) (Clostridium thermocellum).